An 83-amino-acid chain; its full sequence is Large ribosomal subunit protein eL43 (83 aa).

Positions 38, 41, 56, and 59 each coordinate Zn(2+). A C4-type zinc finger spans residues 38–59 (CPVCGRRAVKRISTGIWQCTKC).

It belongs to the eukaryotic ribosomal protein eL43 family. Putative zinc-binding subfamily. In terms of assembly, part of the 50S ribosomal subunit. Requires Zn(2+) as cofactor.

Its function is as follows. Binds to the 23S rRNA. The protein is Large ribosomal subunit protein eL43 of Pyrococcus horikoshii (strain ATCC 700860 / DSM 12428 / JCM 9974 / NBRC 100139 / OT-3).